The following is a 1244-amino-acid chain: ATP-dependent helicase/nuclease subunit A (1244 aa).

Residues 4–477 (TKWTEEQLSA…IQLYKNFRSR (474 aa)) enclose the UvrD-like helicase ATP-binding domain. 25 to 32 (AAAGSGKT) provides a ligand contact to ATP. The 295-residue stretch at 517–811 (KNVDDIIGGP…RIMSIHKSKG (295 aa)) folds into the UvrD-like helicase C-terminal domain.

Belongs to the helicase family. AddA subfamily. As to quaternary structure, heterodimer of AddA and AddB/RexB. Mg(2+) serves as cofactor.

The catalysed reaction is Couples ATP hydrolysis with the unwinding of duplex DNA by translocating in the 3'-5' direction.. The enzyme catalyses ATP + H2O = ADP + phosphate + H(+). The heterodimer acts as both an ATP-dependent DNA helicase and an ATP-dependent, dual-direction single-stranded exonuclease. Recognizes the chi site generating a DNA molecule suitable for the initiation of homologous recombination. The AddA nuclease domain is required for chi fragment generation; this subunit has the helicase and 3' -&gt; 5' nuclease activities. The chain is ATP-dependent helicase/nuclease subunit A from Clostridium botulinum (strain Alaska E43 / Type E3).